The following is a 682-amino-acid chain: MIDRYKHQQLRIGSVSPQQISAWAKKILPNGEIVGEVTKPYTFHYKTNKPEKDGLFCERIFGPIKSGICACGNYRVIGDEKEDPKFCEQCGVEFVDSRVRRYQMGYIKLACPVTHVWYLKRLPSYIANLLDKPLRELEGLVYCDFSFARPIAKKPTFLRLRGSFEYEIQSWKYSIPLFFTTQGFDTFRNREISTGAGAIREQLADLDLRIITAYSLVEWKELGEEGPTGNEWEDRKIGRRKDFLVRRMELAKHFIRTNVEPEWMVLCLLPVLPPELRPIIQIDGGKLMSSDINELYRRVIYRNNTLTDLLTTSRSTPGESVMCQEKLVQEAVDTLLDNGIRGQPMRDGHNKVYKSFSDVIEGKEGRFRETLLGKRVDYSGRSVIVVGPSLSLHRCGLPREIAIELFQTFVIRGLIRQHLASNIGVAKSKIREREPIVWEILQKVIQGHPVLLNRAPTLHRLGIQAFQPILVEGCAICLHPLVRKGFNADFDGDQMAVHVPLSLEAQAEARLLMFSHMNLLSPAIGDPISVPTQDMLMGLYVLTIGNRRGICANRYNPRNRRNYQNERIDDNNYRYTKEKEPYFCSSYDALGAYRQKRINLDSPLWLRWRLDQRVIASREVPIEVQYESLGTYHEIYGHYLIVRSVKKEILCIYIRTTVGHISFYREIEEAIQGFCRACSYGT.

4 residues coordinate Zn(2+): Cys-69, Cys-71, Cys-87, and Cys-90. The Mg(2+) site is built by Asp-489, Asp-491, and Asp-493.

This sequence belongs to the RNA polymerase beta' chain family. RpoC1 subfamily. In terms of assembly, in plastids the minimal PEP RNA polymerase catalytic core is composed of four subunits: alpha, beta, beta', and beta''. When a (nuclear-encoded) sigma factor is associated with the core the holoenzyme is formed, which can initiate transcription. Mg(2+) serves as cofactor. Requires Zn(2+) as cofactor.

It localises to the plastid. It is found in the chloroplast. It carries out the reaction RNA(n) + a ribonucleoside 5'-triphosphate = RNA(n+1) + diphosphate. Functionally, DNA-dependent RNA polymerase catalyzes the transcription of DNA into RNA using the four ribonucleoside triphosphates as substrates. In Platanus occidentalis (Sycamore), this protein is DNA-directed RNA polymerase subunit beta'.